The chain runs to 185 residues: Peptidyl-tRNA hydrolase (185 aa).

Tyrosine 14 contributes to the tRNA binding site. Residue histidine 19 is the Proton acceptor of the active site. Phenylalanine 64, asparagine 66, and asparagine 112 together coordinate tRNA.

The protein belongs to the PTH family. As to quaternary structure, monomer.

It is found in the cytoplasm. It carries out the reaction an N-acyl-L-alpha-aminoacyl-tRNA + H2O = an N-acyl-L-amino acid + a tRNA + H(+). Hydrolyzes ribosome-free peptidyl-tRNAs (with 1 or more amino acids incorporated), which drop off the ribosome during protein synthesis, or as a result of ribosome stalling. Its function is as follows. Catalyzes the release of premature peptidyl moieties from peptidyl-tRNA molecules trapped in stalled 50S ribosomal subunits, and thus maintains levels of free tRNAs and 50S ribosomes. In Halalkalibacterium halodurans (strain ATCC BAA-125 / DSM 18197 / FERM 7344 / JCM 9153 / C-125) (Bacillus halodurans), this protein is Peptidyl-tRNA hydrolase.